A 282-amino-acid polypeptide reads, in one-letter code: Undecaprenyl-diphosphatase (282 aa).

A run of 7 helical transmembrane segments spans residues 40–60 (GAAF…IYFY), 87–107 (MGWM…LFKT), 116–136 (LYWI…AEWL), 153–173 (IGWK…IPGS), 196–216 (FSFL…LYET), 229–249 (NLAV…AFLI), and 256–276 (STAL…GLIA).

It belongs to the UppP family.

It localises to the cell inner membrane. It catalyses the reaction di-trans,octa-cis-undecaprenyl diphosphate + H2O = di-trans,octa-cis-undecaprenyl phosphate + phosphate + H(+). Its function is as follows. Catalyzes the dephosphorylation of undecaprenyl diphosphate (UPP). Confers resistance to bacitracin. This is Undecaprenyl-diphosphatase from Chlorobium phaeobacteroides (strain BS1).